We begin with the raw amino-acid sequence, 434 residues long: Ribosomal protein uS12 methylthiotransferase RimO (434 aa).

In terms of domain architecture, MTTase N-terminal spans 4 to 122 (NRVDVITLGC…LISHLGKSYY (119 aa)). Residues cysteine 13, cysteine 51, cysteine 85, cysteine 146, cysteine 150, and cysteine 153 each coordinate [4Fe-4S] cluster. The Radical SAM core domain occupies 132-363 (TTPRHYAYLK…MAVQERISAA (232 aa)). The region spanning 366 to 434 (EAKIGSRLHV…PFDLYARIVD (69 aa)) is the TRAM domain.

Belongs to the methylthiotransferase family. RimO subfamily. Requires [4Fe-4S] cluster as cofactor.

It localises to the cytoplasm. The enzyme catalyses L-aspartate(89)-[ribosomal protein uS12]-hydrogen + (sulfur carrier)-SH + AH2 + 2 S-adenosyl-L-methionine = 3-methylsulfanyl-L-aspartate(89)-[ribosomal protein uS12]-hydrogen + (sulfur carrier)-H + 5'-deoxyadenosine + L-methionine + A + S-adenosyl-L-homocysteine + 2 H(+). Functionally, catalyzes the methylthiolation of an aspartic acid residue of ribosomal protein uS12. The chain is Ribosomal protein uS12 methylthiotransferase RimO from Porphyromonas gingivalis (strain ATCC BAA-308 / W83).